Consider the following 612-residue polypeptide: Elongation factor 4 (612 aa).

Residues 11–193 (KHIRNFAIVA…KVVKDIPAPS (183 aa)) form the tr-type G domain. Residues 23–28 (DHGKST) and 140–143 (NKID) each bind GTP.

This sequence belongs to the TRAFAC class translation factor GTPase superfamily. Classic translation factor GTPase family. LepA subfamily.

It localises to the cell membrane. The enzyme catalyses GTP + H2O = GDP + phosphate + H(+). Its function is as follows. Required for accurate and efficient protein synthesis under certain stress conditions. May act as a fidelity factor of the translation reaction, by catalyzing a one-codon backward translocation of tRNAs on improperly translocated ribosomes. Back-translocation proceeds from a post-translocation (POST) complex to a pre-translocation (PRE) complex, thus giving elongation factor G a second chance to translocate the tRNAs correctly. Binds to ribosomes in a GTP-dependent manner. In Lactobacillus helveticus (strain DPC 4571), this protein is Elongation factor 4.